A 341-amino-acid chain; its full sequence is L-threonine 3-dehydrogenase (341 aa).

Cys38 contacts Zn(2+). Residues Thr40 and His43 each act as charge relay system in the active site. The Zn(2+) site is built by His63, Glu64, Cys93, Cys96, Cys99, and Cys107. NAD(+)-binding positions include Ile175, Asp195, Arg200, 262–264 (LGI), and 286–287 (IY).

It belongs to the zinc-containing alcohol dehydrogenase family. In terms of assembly, homotetramer. It depends on Zn(2+) as a cofactor.

Its subcellular location is the cytoplasm. It carries out the reaction L-threonine + NAD(+) = (2S)-2-amino-3-oxobutanoate + NADH + H(+). The protein operates within amino-acid degradation; L-threonine degradation via oxydo-reductase pathway; glycine from L-threonine: step 1/2. Its function is as follows. Catalyzes the NAD(+)-dependent oxidation of L-threonine to 2-amino-3-ketobutyrate. The chain is L-threonine 3-dehydrogenase from Salmonella choleraesuis (strain SC-B67).